Reading from the N-terminus, the 320-residue chain is Zygote arrest protein 1 (320 aa).

2 disordered regions span residues 106-130 (ELRR…EVRY) and 155-208 (DRPA…AEGS). The segment at 222 to 305 (KYGYYHCREC…RQDLCGRCKG (84 aa)) adopts a 3CxxC-type zinc-finger fold.

The protein belongs to the ZAR1 family.

The protein resides in the cytoplasm. It localises to the cytoplasmic ribonucleoprotein granule. Functionally, mRNA-binding protein required for maternal mRNA storage, translation and degradation during oocyte maturation. Probably promotes formation of some phase-separated membraneless compartment that stores maternal mRNAs in oocytes: acts by undergoing liquid-liquid phase separation upon binding to maternal mRNAs. Binds to the 3'-UTR of maternal mRNAs, inhibiting their translation. The polypeptide is Zygote arrest protein 1 (Takifugu rubripes (Japanese pufferfish)).